Reading from the N-terminus, the 148-residue chain is Cytochrome c-type biogenesis protein CcmE (148 aa).

The Cytoplasmic portion of the chain corresponds to 1–7 (MKARNKR). The chain crosses the membrane as a helical; Signal-anchor for type II membrane protein span at residues 8-28 (LMLVGGGIALLVAAAALVLSA). At 29–148 (FQQNLVFFHT…AHKTATTVQQ (120 aa)) the chain is on the periplasmic side. Heme contacts are provided by H123 and Y127.

The protein belongs to the CcmE/CycJ family.

Its subcellular location is the cell inner membrane. Functionally, heme chaperone required for the biogenesis of c-type cytochromes. Transiently binds heme delivered by CcmC and transfers the heme to apo-cytochromes in a process facilitated by CcmF and CcmH. The sequence is that of Cytochrome c-type biogenesis protein CcmE from Azoarcus sp. (strain BH72).